Reading from the N-terminus, the 1891-residue chain is Protein TIC 214 (1891 aa).

6 helical membrane passes run 18–38 (IINS…FSIG), 64–84 (FITG…HLAL), 87–107 (PHTI…WNNH), 124–144 (LSIQ…HFIL), 172–192 (VGWL…LVWI), and 221–241 (IFSI…PSPI). Disordered regions lie at residues 248-300 (EASK…EGWD), 788-807 (EEQT…DNKR), and 1580-1607 (KNRS…NLSP). Residues 256-268 (VESEEERDVEIET) show a composition bias toward acidic residues. A compositionally biased stretch (basic and acidic residues) spans 1582–1601 (RSQEAKEPPSQRERGSDIEN).

Belongs to the TIC214 family. In terms of assembly, part of the Tic complex.

Its subcellular location is the plastid. It is found in the chloroplast inner membrane. Involved in protein precursor import into chloroplasts. May be part of an intermediate translocation complex acting as a protein-conducting channel at the inner envelope. The sequence is that of Protein TIC 214 from Solanum lycopersicum (Tomato).